A 192-amino-acid chain; its full sequence is Ferritin-like protein (192 aa).

Residues His-44, Glu-48, and His-102 each contribute to the Fe(3+) site. The interval 143–179 is linker; it reads RFDHDYADPHAHHDEHRDHLADMPSAGSSHEEVQPVA. The span at 149-163 shows a compositional bias: basic and acidic residues; the sequence is ADPHAHHDEHRDHLA. The tract at residues 149 to 192 is disordered; the sequence is ADPHAHHDEHRDHLADMPSAGSSHEEVQPVAHKKKGFTVGSLIQ. Residues 180-192 are targeting peptide; the sequence is HKKKGFTVGSLIQ.

Homodimer, with 2 Fe atoms bound at the subunit interface (without encapsulin), probably also a dimer when encapsulated. 42 electron-dense accretions can be seen inside the nanocompartment which are probably this cargo protein, although perhaps up to one cargo dimer can be bound per shell protein.

Its subcellular location is the encapsulin nanocompartment. It carries out the reaction 4 Fe(2+) + O2 + 4 H(+) = 4 Fe(3+) + 2 H2O. In terms of biological role, cargo protein of a type 1 encapsulin nanocompartment. A ferritin-like iron-binding protein probably involved in iron mineralization in the encapsulin nanocompartment. Has ferroxidase activity even when encapsulated, the rate is probably controlled by the rate of Fe flux across the nanocompartment pores. Part of the iron-mineralizing encapsulin-associated Firmicute (IMEF) system. 2 different cargo proteins have been identified (IMEF and Fer); when both are expressed in E.coli with the shell protein only IMEF is detected within the nanocompartment. E.coli expressing all 3 genes stores the largest amount of iron and is protected from Fe/H2O2-induced oxidative stress. This Bacillus thermotolerans (Quasibacillus thermotolerans) protein is Ferritin-like protein.